We begin with the raw amino-acid sequence, 410 residues long: Peptidase T (410 aa).

H78 is a Zn(2+) binding site. D80 is a catalytic residue. A Zn(2+)-binding site is contributed by D140. Residue E174 is the Proton acceptor of the active site. 3 residues coordinate Zn(2+): E175, D197, and H379.

The protein belongs to the peptidase M20B family. The cofactor is Zn(2+).

It localises to the cytoplasm. The catalysed reaction is Release of the N-terminal residue from a tripeptide.. In terms of biological role, cleaves the N-terminal amino acid of tripeptides. The polypeptide is Peptidase T (Vibrio atlanticus (strain LGP32) (Vibrio splendidus (strain Mel32))).